Here is a 92-residue protein sequence, read N- to C-terminus: Phosphoribosyl-ATP pyrophosphatase (92 aa).

It belongs to the PRA-PH family.

The protein resides in the cytoplasm. The enzyme catalyses 1-(5-phospho-beta-D-ribosyl)-ATP + H2O = 1-(5-phospho-beta-D-ribosyl)-5'-AMP + diphosphate + H(+). Its pathway is amino-acid biosynthesis; L-histidine biosynthesis; L-histidine from 5-phospho-alpha-D-ribose 1-diphosphate: step 2/9. The chain is Phosphoribosyl-ATP pyrophosphatase from Leptospira interrogans serogroup Icterohaemorrhagiae serovar copenhageni (strain Fiocruz L1-130).